The sequence spans 352 residues: N-terminal EF-hand calcium-binding protein 1 (352 aa).

Serine 4 carries the phosphoserine modification. 2 consecutive EF-hand domains span residues lysine 26–serine 61 and leucine 60–glutamate 95. 5 residues coordinate Ca(2+): aspartate 39, asparagine 41, aspartate 43, lysine 45, and glutamate 50. A coiled-coil region spans residues leucine 135–glutamine 163. A disordered region spans residues glycine 180–valine 202. Positions histidine 190–valine 202 are enriched in polar residues. A phosphoserine mark is found at serine 192 and serine 197. Positions glutamate 209–tyrosine 275 form a coiled coil. The ABM domain maps to methionine 252–methionine 340.

As to quaternary structure, interacts with STX1. May interact with CPNE6.

It is found in the cytoplasm. In Pongo abelii (Sumatran orangutan), this protein is N-terminal EF-hand calcium-binding protein 1 (NECAB1).